The chain runs to 2238 residues: COPII coat assembly protein SEC16 (2238 aa).

Over residues 1-20 (MTPEAKRKKNQKKKLRQKQK) the composition is skewed to basic residues. 15 disordered regions span residues 1–115 (MTPE…DNYH), 135–161 (GGSI…SDPD), 173–255 (GQPL…DYPK), 297–363 (EEVD…DTHK), 394–596 (DDEQ…TSAD), 642–666 (MSTS…SINT), 757–787 (FTNQ…PAQI), 824–878 (GNSA…SPST), 892–988 (LVHS…TVLP), 1547–1577 (PPTN…NRPN), 1600–1703 (GKKS…PPIQ), 1732–1766 (TASP…MDPK), 1809–1901 (NEEE…PKGK), 1928–2102 (RPQE…GWLK), and 2133–2238 (KNAS…MENL). The span at 45 to 87 (LTSNSNVSTPDYTSNFEISVTSTQEVNVDSQLSQNQNSDNFIN) shows a compositional bias: polar residues. Residues 100–115 (FDSHEDIESEMKDNYH) are compositionally biased toward basic and acidic residues. Composition is skewed to polar residues over residues 135–144 (GGSIDSSNTV) and 217–236 (LASN…NLLT). Composition is skewed to basic and acidic residues over residues 238 to 255 (NRLE…DYPK) and 297 to 322 (EEVD…HSEE). The span at 325–335 (TSSVSTQTGMA) shows a compositional bias: polar residues. Basic and acidic residues predominate over residues 351-363 (KMEERNINSDTHK). A compositionally biased stretch (acidic residues) spans 394–404 (DDEQSVNDLQD). Residues 405 to 448 (ESSLLQEETTFSQIPKNEVNTENQENIGSESVSKINVANENSME) show a composition bias toward polar residues. Composition is skewed to basic and acidic residues over residues 480–513 (EVSH…KKED) and 535–553 (MKSE…KEES). 3 stretches are compositionally biased toward polar residues: residues 556–596 (NVRT…TSAD), 657–666 (RPSSHSSINT), and 757–784 (FTNQ…SVNP). Residues 824 to 842 (GNSAVSTTSGKSVGTSVAT) show a composition bias toward low complexity. Composition is skewed to polar residues over residues 843-878 (KQNP…SPST), 893-936 (VHSS…SQND), 946-957 (STGQYAGYSSHS), 1548-1565 (PTNT…QRAV), 1610-1638 (NRAS…STPN), 1732-1747 (TASP…SNYS), 1824-1849 (VDQS…TVSI), and 1936-1948 (TSSI…QISN). The span at 1963-1972 (VELKQDEVSK) shows a compositional bias: basic and acidic residues. Over residues 2034 to 2053 (QYDDVVEEDSDDSDDSEDDS) the composition is skewed to acidic residues.

The protein belongs to the SEC16 family.

Its subcellular location is the endoplasmic reticulum membrane. Involved in the initiation of assembly of the COPII coat required for the formation of transport vesicles from the endoplasmic reticulum (ER) and the selection of cargo molecules. Also involved in autophagy. This Candida glabrata (strain ATCC 2001 / BCRC 20586 / JCM 3761 / NBRC 0622 / NRRL Y-65 / CBS 138) (Yeast) protein is COPII coat assembly protein SEC16 (SEC16).